The sequence spans 456 residues: Bifunctional protein GlmU (456 aa).

The segment at 1–228 (MPQNTLNIVI…SHLAAGVNNK (228 aa)) is pyrophosphorylase. Residues 11–14 (LAAG), Lys25, Gln75, 80–81 (GT), 102–104 (YGD), Gly138, Glu153, Asn168, and Asn226 contribute to the UDP-N-acetyl-alpha-D-glucosamine site. Asp104 lines the Mg(2+) pocket. Asn226 contacts Mg(2+). The linker stretch occupies residues 229-249 (LQLTELERIFQTEQAQELLKA). The N-acetyltransferase stretch occupies residues 250–456 (GVTLRDPARF…GWVRPEKDKQ (207 aa)). The UDP-N-acetyl-alpha-D-glucosamine site is built by Arg332 and Lys350. His362 functions as the Proton acceptor in the catalytic mechanism. Tyr365 and Asn376 together coordinate UDP-N-acetyl-alpha-D-glucosamine. Residues Ala379, 385-386 (NY), Ser404, Ala422, and Arg439 each bind acetyl-CoA.

The protein in the N-terminal section; belongs to the N-acetylglucosamine-1-phosphate uridyltransferase family. This sequence in the C-terminal section; belongs to the transferase hexapeptide repeat family. As to quaternary structure, homotrimer. Mg(2+) is required as a cofactor.

It is found in the cytoplasm. The catalysed reaction is alpha-D-glucosamine 1-phosphate + acetyl-CoA = N-acetyl-alpha-D-glucosamine 1-phosphate + CoA + H(+). It carries out the reaction N-acetyl-alpha-D-glucosamine 1-phosphate + UTP + H(+) = UDP-N-acetyl-alpha-D-glucosamine + diphosphate. The protein operates within nucleotide-sugar biosynthesis; UDP-N-acetyl-alpha-D-glucosamine biosynthesis; N-acetyl-alpha-D-glucosamine 1-phosphate from alpha-D-glucosamine 6-phosphate (route II): step 2/2. Its pathway is nucleotide-sugar biosynthesis; UDP-N-acetyl-alpha-D-glucosamine biosynthesis; UDP-N-acetyl-alpha-D-glucosamine from N-acetyl-alpha-D-glucosamine 1-phosphate: step 1/1. It participates in bacterial outer membrane biogenesis; LPS lipid A biosynthesis. Catalyzes the last two sequential reactions in the de novo biosynthetic pathway for UDP-N-acetylglucosamine (UDP-GlcNAc). The C-terminal domain catalyzes the transfer of acetyl group from acetyl coenzyme A to glucosamine-1-phosphate (GlcN-1-P) to produce N-acetylglucosamine-1-phosphate (GlcNAc-1-P), which is converted into UDP-GlcNAc by the transfer of uridine 5-monophosphate (from uridine 5-triphosphate), a reaction catalyzed by the N-terminal domain. This is Bifunctional protein GlmU from Neisseria meningitidis serogroup B (strain ATCC BAA-335 / MC58).